A 443-amino-acid chain; its full sequence is D-alanyl-D-alanine carboxypeptidase DacA (443 aa).

The signal sequence occupies residues 1 to 31 (MNIKKCKQLLMSLVVLTLAVTCLAPMSKAKA). S67 acts as the Acyl-ester intermediate in catalysis. The Proton acceptor role is filled by K70. The active site involves S131. Position 258 (K258) interacts with substrate.

This sequence belongs to the peptidase S11 family.

It is found in the secreted. The protein localises to the cell wall. The protein resides in the cell membrane. Its subcellular location is the membrane raft. It carries out the reaction Preferential cleavage: (Ac)2-L-Lys-D-Ala-|-D-Ala. Also transpeptidation of peptidyl-alanyl moieties that are N-acyl substituents of D-alanine.. It functions in the pathway cell wall biogenesis; peptidoglycan biosynthesis. In terms of biological role, removes C-terminal D-alanyl residues from sugar-peptide cell wall precursors. This chain is D-alanyl-D-alanine carboxypeptidase DacA (dacA), found in Bacillus subtilis (strain 168).